The primary structure comprises 424 residues: Enolase (424 aa).

Gln-163 serves as a coordination point for (2R)-2-phosphoglycerate. Catalysis depends on Glu-204, which acts as the Proton donor. Mg(2+)-binding residues include Asp-241, Glu-284, and Asp-311. Lys-336, Arg-365, Ser-366, and Lys-387 together coordinate (2R)-2-phosphoglycerate. The Proton acceptor role is filled by Lys-336.

Belongs to the enolase family. Mg(2+) serves as cofactor.

It is found in the cytoplasm. Its subcellular location is the secreted. It localises to the cell surface. The catalysed reaction is (2R)-2-phosphoglycerate = phosphoenolpyruvate + H2O. It functions in the pathway carbohydrate degradation; glycolysis; pyruvate from D-glyceraldehyde 3-phosphate: step 4/5. Functionally, catalyzes the reversible conversion of 2-phosphoglycerate (2-PG) into phosphoenolpyruvate (PEP). It is essential for the degradation of carbohydrates via glycolysis. This chain is Enolase, found in Dictyoglomus thermophilum (strain ATCC 35947 / DSM 3960 / H-6-12).